We begin with the raw amino-acid sequence, 205 residues long: Transcriptional regulatory protein PdtaR (205 aa).

In terms of domain architecture, Response regulatory spans Arg15–Val129. Position 65 is a 4-aspartylphosphate (Asp65). The ANTAR domain occupies Ile135 to Leu196.

Post-translationally, phosphorylated and activated by PdtaS.

Its subcellular location is the cytoplasm. In terms of biological role, member of the two-component regulatory system PdtaR/PdtaS. This two-component system plays an essential role in mycobacterial adaptation to poor nutrient conditions. PdtaR probably acts at the level of transcriptional antitermination rather than transcriptional initiation. Its function is as follows. In addition, the PdtaR/PdtaS two-component system controls copper and nitric oxide (NO) resistance downstream of the intramembrane protease Rip1. This coupled Rip1/PdtaS/PdtaR circuit controls NO resistance and acute lung infection in mice by relieving PdtaR/PdtaS-mediated repression of isonitrile chalkophore biosynthesis. Two signals are required to fully inactivate the PdtaR/PdtaS system and mediate NO resistance: a cytoplasmic inhibitory signal through the PdtaS kinase mediated by direct sensing of NO and the production of PPE1-5', an NO-induced small RNA, to sequester PdtaR. The protein is Transcriptional regulatory protein PdtaR (pdtaR) of Mycobacterium tuberculosis (strain CDC 1551 / Oshkosh).